The primary structure comprises 122 residues: MIQPQTHLNVADNSGARELMCIRILGASNRRYAYIGDIVVAVIKQAVPNTNLERSEVIRAVIVRTCKELKRSNGIIIQYDDNAAVVIDQEGNPKGTRIFCAIARELRQLNFTKIVSLAPEVL.

This sequence belongs to the universal ribosomal protein uL14 family. Part of the 50S ribosomal subunit.

Its subcellular location is the plastid. The protein localises to the chloroplast. In terms of biological role, binds to 23S rRNA. This chain is Large ribosomal subunit protein uL14c, found in Glycine max (Soybean).